Consider the following 302-residue polypeptide: Putative peptide permease protein BMEII0861 (302 aa).

The interval 1 to 22 (MRSSIHASRLRKMGQSIPASTG) is disordered. The next 5 helical transmembrane spans lie at 38-58 (IFGL…PLWL), 101-121 (LLVA…IGAI), 147-167 (IFLL…VVVI), 230-250 (ILLE…AASW), and 268-288 (WQWL…NFIG). One can recognise an ABC transmembrane type-1 domain in the interval 97–288 (GRISLLVAVS…LAVLAINFIG (192 aa)).

It belongs to the binding-protein-dependent transport system permease family. The complex is composed of two ATP-binding proteins (BMEII0863 and BMEII0864), two transmembrane proteins (BMEII0860 and BMEII0861) and a solute-binding protein (BMEII0859).

It is found in the cell inner membrane. In terms of biological role, probably part of an ABC transporter complex that could be involved in peptide import. Probably responsible for the translocation of the substrate across the membrane. The protein is Putative peptide permease protein BMEII0861 of Brucella melitensis biotype 1 (strain ATCC 23456 / CCUG 17765 / NCTC 10094 / 16M).